Reading from the N-terminus, the 539-residue chain is Tyrosinase (539 aa).

Cu cation contacts are provided by His-63, His-84, His-93, His-290, His-294, and His-333. The segment at residues Cys-82–His-84 is a cross-link (2'-(S-cysteinyl)-histidine (Cys-His)).

It belongs to the tyrosinase family. Homotetramer. Cu(2+) is required as a cofactor. In terms of processing, the N-terminus is blocked.

It catalyses the reaction 2 L-dopa + O2 = 2 L-dopaquinone + 2 H2O. The enzyme catalyses L-tyrosine + O2 = L-dopaquinone + H2O. Activated by acidifying treatment at pH 3.0. In terms of biological role, this is a copper-containing oxidase that functions in the formation of pigments such as melanins and other polyphenolic compounds. The chain is Tyrosinase (melO) from Aspergillus oryzae (strain ATCC 42149 / RIB 40) (Yellow koji mold).